A 597-amino-acid polypeptide reads, in one-letter code: Elongation factor 4 (597 aa).

The tr-type G domain maps to Asp-2 to Lys-184. Residues Asp-14–Thr-19 and Asn-131–Asp-134 contribute to the GTP site.

It belongs to the TRAFAC class translation factor GTPase superfamily. Classic translation factor GTPase family. LepA subfamily.

The protein resides in the cell inner membrane. It catalyses the reaction GTP + H2O = GDP + phosphate + H(+). Functionally, required for accurate and efficient protein synthesis under certain stress conditions. May act as a fidelity factor of the translation reaction, by catalyzing a one-codon backward translocation of tRNAs on improperly translocated ribosomes. Back-translocation proceeds from a post-translocation (POST) complex to a pre-translocation (PRE) complex, thus giving elongation factor G a second chance to translocate the tRNAs correctly. Binds to ribosomes in a GTP-dependent manner. This is Elongation factor 4 from Cupriavidus pinatubonensis (strain JMP 134 / LMG 1197) (Cupriavidus necator (strain JMP 134)).